We begin with the raw amino-acid sequence, 147 residues long: UPF0208 membrane protein PM0703 (147 aa).

The next 2 helical transmembrane spans lie at 32–52 (VIKA…FAIT) and 65–85 (LAIA…GLYW).

The protein belongs to the UPF0208 family.

The protein localises to the cell inner membrane. The chain is UPF0208 membrane protein PM0703 from Pasteurella multocida (strain Pm70).